Here is a 361-residue protein sequence, read N- to C-terminus: MVPERGADPRKIIHVDMDAFYASVEQRDNPELRGKPLAVGGAAARGVVAAASYEARAFGVRSAMPSVTAKRKCPELIFVPPRFDVYRAVSAQIRDVFAEHTDLIEPLSLDEAYLDVTQNRLNISSATTIAEMIRAKILEVTGLTASAGISYNKFLAKMASDQNKPNGQFVITPRHGPAFVETLPVNKFHGVGPATAAKMEALGIETGADLKERSLSFLQQHFGKSGLWYYQIARAIDERAVDPDRPRKSIGAEDTFAADIVDLETSLAELKPLVAKVWGYCEGKGIRGRTVTLKIKFADFQQITRSRTVAVPIELSDFEHLAADLLGSVFPVRKGIRLLGVTLSSLGDVLPPDQRQLRFEL.

The 181-residue stretch at 12-192 (IIHVDMDAFY…LPVNKFHGVG (181 aa)) folds into the UmuC domain. Mg(2+) contacts are provided by Asp-16 and Asp-110. The active site involves Glu-111.

The protein belongs to the DNA polymerase type-Y family. As to quaternary structure, monomer. The cofactor is Mg(2+).

It localises to the cytoplasm. The catalysed reaction is DNA(n) + a 2'-deoxyribonucleoside 5'-triphosphate = DNA(n+1) + diphosphate. Its function is as follows. Poorly processive, error-prone DNA polymerase involved in untargeted mutagenesis. Copies undamaged DNA at stalled replication forks, which arise in vivo from mismatched or misaligned primer ends. These misaligned primers can be extended by PolIV. Exhibits no 3'-5' exonuclease (proofreading) activity. May be involved in translesional synthesis, in conjunction with the beta clamp from PolIII. In Mesorhizobium japonicum (strain LMG 29417 / CECT 9101 / MAFF 303099) (Mesorhizobium loti (strain MAFF 303099)), this protein is DNA polymerase IV 3 (dinB3).